The following is a 380-amino-acid chain: Probable pectin lyase A (380 aa).

The signal sequence occupies residues 1 to 20 (MRYTSLFTAVTAALASTAAA). Intrachain disulfides connect cysteine 83–cysteine 102 and cysteine 92–cysteine 226. A glycan (N-linked (GlcNAc...) asparagine) is linked at asparagine 129. Arginine 256 is a catalytic residue. A disulfide bond links cysteine 323 and cysteine 331.

It belongs to the polysaccharide lyase 1 family.

The protein resides in the secreted. It catalyses the reaction Eliminative cleavage of (1-&gt;4)-alpha-D-galacturonan methyl ester to give oligosaccharides with 4-deoxy-6-O-methyl-alpha-D-galact-4-enuronosyl groups at their non-reducing ends.. Pectinolytic enzymes consist of four classes of enzymes: pectin lyase, polygalacturonase, pectin methylesterase and rhamnogalacturonase. Among pectinolytic enzymes, pectin lyase is the most important in depolymerization of pectin, since it cleaves internal glycosidic bonds of highly methylated pectins. This chain is Probable pectin lyase A (pelA), found in Aspergillus fumigatus (strain ATCC MYA-4609 / CBS 101355 / FGSC A1100 / Af293) (Neosartorya fumigata).